A 286-amino-acid chain; its full sequence is UPF0173 metal-dependent hydrolase RALTA_A1748 (286 aa).

This sequence belongs to the UPF0173 family.

The polypeptide is UPF0173 metal-dependent hydrolase RALTA_A1748 (Cupriavidus taiwanensis (strain DSM 17343 / BCRC 17206 / CCUG 44338 / CIP 107171 / LMG 19424 / R1) (Ralstonia taiwanensis (strain LMG 19424))).